The sequence spans 221 residues: MSTNQEFNLLSNRFRTFYPVVIDIETAGFNANTDAVLEIAIITLKMDELGWLHKEDTLHFHIEPFKGSIINSDAIAFNKIDPFNPLRGAISEKIAIQSILKKVRNGIKIQGCSRGIVVAHNANFDHNFLMAAIQRVKIKNNPFHPFATFDTAALSGLVVGQTVLSKACKAIGLSFDNHQAHSALYDTLQTANLFCELVNRWKRLGGWPVDIKKNNSTSNKY.

In terms of domain architecture, Exonuclease spans valine 20–phenylalanine 194. Residues aspartate 23, glutamate 25, histidine 181, and aspartate 186 each coordinate Mg(2+). The Proton donor/acceptor role is filled by histidine 181.

Belongs to the RNase T family. In terms of assembly, homodimer. Requires Mg(2+) as cofactor.

Trims short 3' overhangs of a variety of RNA species, leaving a one or two nucleotide 3' overhang. Responsible for the end-turnover of tRNA: specifically removes the terminal AMP residue from uncharged tRNA (tRNA-C-C-A). Also appears to be involved in tRNA biosynthesis. The chain is Ribonuclease T from Buchnera aphidicola subsp. Acyrthosiphon pisum (strain APS) (Acyrthosiphon pisum symbiotic bacterium).